The chain runs to 384 residues: S-adenosylmethionine synthase (384 aa).

Histidine 15 is an ATP binding site. A Mg(2+)-binding site is contributed by aspartate 17. Position 43 (glutamate 43) interacts with K(+). Residues glutamate 56 and glutamine 99 each contribute to the L-methionine site. The segment at 99–109 (QSPDINQGVDR) is flexible loop. ATP contacts are provided by residues 164–166 (DAK), 230–231 (RF), aspartate 239, 245–246 (RK), alanine 262, and lysine 266. Aspartate 239 contributes to the L-methionine binding site. Lysine 270 is an L-methionine binding site.

It belongs to the AdoMet synthase family. As to quaternary structure, homotetramer; dimer of dimers. The cofactor is Mg(2+). It depends on K(+) as a cofactor.

It is found in the cytoplasm. The enzyme catalyses L-methionine + ATP + H2O = S-adenosyl-L-methionine + phosphate + diphosphate. The protein operates within amino-acid biosynthesis; S-adenosyl-L-methionine biosynthesis; S-adenosyl-L-methionine from L-methionine: step 1/1. Catalyzes the formation of S-adenosylmethionine (AdoMet) from methionine and ATP. The overall synthetic reaction is composed of two sequential steps, AdoMet formation and the subsequent tripolyphosphate hydrolysis which occurs prior to release of AdoMet from the enzyme. This is S-adenosylmethionine synthase from Erwinia tasmaniensis (strain DSM 17950 / CFBP 7177 / CIP 109463 / NCPPB 4357 / Et1/99).